The following is a 189-amino-acid chain: dCTP deaminase (189 aa).

Residues 112–117 (KSTYAR), 136–138 (TLE), Q157, Y171, and Q181 contribute to the dCTP site. Catalysis depends on E138, which acts as the Proton donor/acceptor.

It belongs to the dCTP deaminase family. As to quaternary structure, homotrimer.

The catalysed reaction is dCTP + H2O + H(+) = dUTP + NH4(+). It participates in pyrimidine metabolism; dUMP biosynthesis; dUMP from dCTP (dUTP route): step 1/2. Its function is as follows. Catalyzes the deamination of dCTP to dUTP. This is dCTP deaminase from Burkholderia thailandensis (strain ATCC 700388 / DSM 13276 / CCUG 48851 / CIP 106301 / E264).